The following is a 208-amino-acid chain: Thymidylate kinase (208 aa).

10–17 (GGEGAGKS) provides a ligand contact to ATP.

Belongs to the thymidylate kinase family.

The enzyme catalyses dTMP + ATP = dTDP + ADP. Its function is as follows. Phosphorylation of dTMP to form dTDP in both de novo and salvage pathways of dTTP synthesis. The protein is Thymidylate kinase of Alcanivorax borkumensis (strain ATCC 700651 / DSM 11573 / NCIMB 13689 / SK2).